A 213-amino-acid polypeptide reads, in one-letter code: 5-methylthioribulose-1-phosphate/5-deoxyribulose-1-phosphate aldolase (213 aa).

Glutamate 73 (proton donor/acceptor) is an active-site residue. Co(2+) is bound by residues glutamate 73, histidine 92, histidine 94, and histidine 155.

The protein belongs to the aldolase class II family. Co(2+) serves as cofactor.

The enzyme catalyses 5-(methylsulfanyl)-D-ribulose 1-phosphate = 2-(methylsulfanyl)acetaldehyde + dihydroxyacetone phosphate. The catalysed reaction is 5-deoxy-D-ribulose 1-phosphate = dihydroxyacetone phosphate + acetaldehyde. It functions in the pathway amino-acid biosynthesis; L-methionine biosynthesis via salvage pathway. In terms of biological role, uses 5-methylthioribulose-1-phosphate to yield 2-(methylthio)acetaldehyde and dihydroxyacetone phosphate. Can also use 5-deoxyribulose 1-phosphate to yield acetaldehyde and dihydroxyacetone phosphate. Part of a bifunctional DHAP-shunt salvage pathway for SAM by-products. The sequence is that of 5-methylthioribulose-1-phosphate/5-deoxyribulose-1-phosphate aldolase from Escherichia coli O45:K1 (strain S88 / ExPEC).